A 716-amino-acid chain; its full sequence is Calpain clp-4 (716 aa).

Residues 31–53 (DDDDKQEAPVAVSKAPKGKGSNH) are disordered. Residues 240-536 (LFEDPEFPAT…FTQMEVCNLT (297 aa)) enclose the Calpain catalytic domain. Catalysis depends on residues Cys-295, His-452, and Asn-476.

Belongs to the peptidase C2 family.

In terms of biological role, calcium-regulated non-lysosomal thiol-protease which catalyzes limited proteolysis of substrates. Promotes starvation-induced muscle atrophy. This chain is Calpain clp-4, found in Caenorhabditis elegans.